Here is a 204-residue protein sequence, read N- to C-terminus: Imidazole glycerol phosphate synthase subunit HisH (204 aa).

The Glutamine amidotransferase type-1 domain maps to lysine 5–leucine 204. The Nucleophile role is filled by cysteine 80. Catalysis depends on residues histidine 186 and glutamate 188.

Heterodimer of HisH and HisF.

The protein localises to the cytoplasm. The catalysed reaction is 5-[(5-phospho-1-deoxy-D-ribulos-1-ylimino)methylamino]-1-(5-phospho-beta-D-ribosyl)imidazole-4-carboxamide + L-glutamine = D-erythro-1-(imidazol-4-yl)glycerol 3-phosphate + 5-amino-1-(5-phospho-beta-D-ribosyl)imidazole-4-carboxamide + L-glutamate + H(+). It carries out the reaction L-glutamine + H2O = L-glutamate + NH4(+). Its pathway is amino-acid biosynthesis; L-histidine biosynthesis; L-histidine from 5-phospho-alpha-D-ribose 1-diphosphate: step 5/9. IGPS catalyzes the conversion of PRFAR and glutamine to IGP, AICAR and glutamate. The HisH subunit catalyzes the hydrolysis of glutamine to glutamate and ammonia as part of the synthesis of IGP and AICAR. The resulting ammonia molecule is channeled to the active site of HisF. This Vibrio parahaemolyticus serotype O3:K6 (strain RIMD 2210633) protein is Imidazole glycerol phosphate synthase subunit HisH.